The chain runs to 102 residues: NADH-quinone oxidoreductase subunit K (102 aa).

The next 3 helical transmembrane spans lie at 6 to 26 (LEHG…GVMV), 30 to 50 (LLFM…AFVL), and 62 to 82 (IMFI…LAIV).

The protein belongs to the complex I subunit 4L family. NDH-1 is composed of 14 different subunits. Subunits NuoA, H, J, K, L, M, N constitute the membrane sector of the complex.

The protein localises to the cell inner membrane. It carries out the reaction a quinone + NADH + 5 H(+)(in) = a quinol + NAD(+) + 4 H(+)(out). In terms of biological role, NDH-1 shuttles electrons from NADH, via FMN and iron-sulfur (Fe-S) centers, to quinones in the respiratory chain. The immediate electron acceptor for the enzyme in this species is believed to be ubiquinone. Couples the redox reaction to proton translocation (for every two electrons transferred, four hydrogen ions are translocated across the cytoplasmic membrane), and thus conserves the redox energy in a proton gradient. The chain is NADH-quinone oxidoreductase subunit K from Acinetobacter baylyi (strain ATCC 33305 / BD413 / ADP1).